The following is a 317-amino-acid chain: Ribose-phosphate pyrophosphokinase (317 aa).

Residues 43 to 45 and 102 to 103 contribute to the ATP site; these read DGE and RQ. Mg(2+)-binding residues include His136 and Asp175. Lys198 is a catalytic residue. D-ribose 5-phosphate contacts are provided by residues Arg200, Asp224, and 228 to 232; that span reads DTAGT.

Belongs to the ribose-phosphate pyrophosphokinase family. Class I subfamily. As to quaternary structure, homohexamer. Mg(2+) serves as cofactor.

The protein localises to the cytoplasm. The catalysed reaction is D-ribose 5-phosphate + ATP = 5-phospho-alpha-D-ribose 1-diphosphate + AMP + H(+). It participates in metabolic intermediate biosynthesis; 5-phospho-alpha-D-ribose 1-diphosphate biosynthesis; 5-phospho-alpha-D-ribose 1-diphosphate from D-ribose 5-phosphate (route I): step 1/1. In terms of biological role, involved in the biosynthesis of the central metabolite phospho-alpha-D-ribosyl-1-pyrophosphate (PRPP) via the transfer of pyrophosphoryl group from ATP to 1-hydroxyl of ribose-5-phosphate (Rib-5-P). In Oceanobacillus iheyensis (strain DSM 14371 / CIP 107618 / JCM 11309 / KCTC 3954 / HTE831), this protein is Ribose-phosphate pyrophosphokinase.